The primary structure comprises 870 residues: Outer membrane usher protein FimD (870 aa).

Positions 1-27 (MKKTTWFAGRFPGYVSPLSSVALSVLA) are cleaved as a signal peptide. A disulfide bridge connects residues Cys-843 and Cys-865.

It belongs to the fimbrial export usher family.

The protein localises to the cell outer membrane. Its function is as follows. Involved in the export and assembly of FimA fimbrial subunits across the outer membrane. The polypeptide is Outer membrane usher protein FimD (fimD) (Salmonella typhimurium (strain LT2 / SGSC1412 / ATCC 700720)).